We begin with the raw amino-acid sequence, 90 residues long: Probable two-component-system connector protein YmgA (90 aa).

Residues 63 to 80 show a composition bias toward polar residues; that stretch reads SDSGGPNRRTATADNKSM. The interval 63 to 90 is disordered; that stretch reads SDSGGPNRRTATADNKSMFNGKKINRIH.

In terms of biological role, probably a connector protein for RcsB/C regulation of biofilm formation, providing additional signal input into the two-component signaling pathway. May serve to stimulate biofilm maturation, probably via the Rcs phosphorelay. Mild overexpression at 16 degrees Celsius increases the production of colanic acid, an exopolysaccharide and matrix component, and reduces adhesive curli fimbriae expression. Both of these effects require RcsB. This chain is Probable two-component-system connector protein YmgA (ymgA), found in Escherichia coli (strain K12).